A 29-amino-acid polypeptide reads, in one-letter code: Thrombin-like enzyme collinein-2 (29 aa).

In terms of assembly, monomer. In terms of tissue distribution, expressed by the venom gland.

Its subcellular location is the secreted. Its function is as follows. Thrombin-like snake venom serine protease. The chain is Thrombin-like enzyme collinein-2 from Crotalus durissus collilineatus (Brazilian rattlesnake).